The following is a 416-amino-acid chain: D-amino acid dehydrogenase (416 aa).

3–17 (VIVLGAGIVGVTSAY) is an FAD binding site.

The protein belongs to the DadA oxidoreductase family. FAD serves as cofactor.

The enzyme catalyses a D-alpha-amino acid + A + H2O = a 2-oxocarboxylate + AH2 + NH4(+). The protein operates within amino-acid degradation; D-alanine degradation; NH(3) and pyruvate from D-alanine: step 1/1. Its function is as follows. Oxidative deamination of D-amino acids. In Rhizobium johnstonii (strain DSM 114642 / LMG 32736 / 3841) (Rhizobium leguminosarum bv. viciae), this protein is D-amino acid dehydrogenase.